Here is a 556-residue protein sequence, read N- to C-terminus: Protein trichome birefringence-like 1 (556 aa).

A helical; Signal-anchor for type II membrane protein membrane pass occupies residues 38–58; sequence TFVYAFVVTFVALTVFLAFSP. The GDS motif signature appears at 269–271; that stretch reads GDS. The DCXHWCLPGXXDXWN motif signature appears at 514–528; that stretch reads DCSHWCLPGVPDSWN.

It belongs to the PC-esterase family. TBL subfamily. In terms of tissue distribution, not expressed in trichomes.

It is found in the membrane. In terms of biological role, can complement TBR and is therefore functionally equivalent, but may work in different tissue. May act as a bridging protein that binds pectin and other cell wall polysaccharides. Probably involved in maintaining esterification of pectins. May be involved in the specific O-acetylation of cell wall polymers. The protein is Protein trichome birefringence-like 1 (TBL1) of Arabidopsis thaliana (Mouse-ear cress).